The chain runs to 392 residues: L-rhamnonate dehydratase (392 aa).

Substrate is bound by residues H22 and R48. The Mg(2+) site is built by D214, E240, and E268. The Proton acceptor role is filled by H318. E338 is a substrate binding site.

It belongs to the mandelate racemase/muconate lactonizing enzyme family. RhamD subfamily. In terms of assembly, homooctamer; tetramer of dimers. Mg(2+) serves as cofactor.

It catalyses the reaction L-rhamnonate = 2-dehydro-3-deoxy-L-rhamnonate + H2O. Functionally, catalyzes the dehydration of L-rhamnonate to 2-keto-3-deoxy-L-rhamnonate (KDR). This is L-rhamnonate dehydratase from Burkholderia ambifaria (strain MC40-6).